Here is a 309-residue protein sequence, read N- to C-terminus: Probable manganese-dependent inorganic pyrophosphatase (309 aa).

Positions 9, 13, 15, 75, 97, and 149 each coordinate Mn(2+).

Belongs to the PPase class C family. Mn(2+) serves as cofactor.

It is found in the cytoplasm. It carries out the reaction diphosphate + H2O = 2 phosphate + H(+). The protein is Probable manganese-dependent inorganic pyrophosphatase of Bacillus velezensis (strain DSM 23117 / BGSC 10A6 / LMG 26770 / FZB42) (Bacillus amyloliquefaciens subsp. plantarum).